The sequence spans 86 residues: Exodeoxyribonuclease 7 small subunit (86 aa).

Residues 1 to 26 form a disordered region; sequence MQDELFETEKAPQKNAKNAKNAPKKS.

This sequence belongs to the XseB family. In terms of assembly, heterooligomer composed of large and small subunits.

Its subcellular location is the cytoplasm. The enzyme catalyses Exonucleolytic cleavage in either 5'- to 3'- or 3'- to 5'-direction to yield nucleoside 5'-phosphates.. In terms of biological role, bidirectionally degrades single-stranded DNA into large acid-insoluble oligonucleotides, which are then degraded further into small acid-soluble oligonucleotides. The chain is Exodeoxyribonuclease 7 small subunit from Helicobacter pylori (strain J99 / ATCC 700824) (Campylobacter pylori J99).